We begin with the raw amino-acid sequence, 291 residues long: Acetyl-coenzyme A carboxylase carboxyl transferase subunit beta (291 aa).

Residues 1 to 23 (MSWLSKLMPSGIRTDNTPSKKRS) are disordered. Residues 28-291 (LWEKCSNCGS…LGRQPAPEVA (264 aa)) form the CoA carboxyltransferase N-terminal domain. Residues cysteine 32, cysteine 35, cysteine 51, and cysteine 54 each contribute to the Zn(2+) site. The segment at 32–54 (CSNCGSALYRPELEENLEVCPKC) adopts a C4-type zinc-finger fold.

This sequence belongs to the AccD/PCCB family. In terms of assembly, acetyl-CoA carboxylase is a heterohexamer composed of biotin carboxyl carrier protein (AccB), biotin carboxylase (AccC) and two subunits each of ACCase subunit alpha (AccA) and ACCase subunit beta (AccD). Zn(2+) serves as cofactor.

It is found in the cytoplasm. It catalyses the reaction N(6)-carboxybiotinyl-L-lysyl-[protein] + acetyl-CoA = N(6)-biotinyl-L-lysyl-[protein] + malonyl-CoA. It functions in the pathway lipid metabolism; malonyl-CoA biosynthesis; malonyl-CoA from acetyl-CoA: step 1/1. Component of the acetyl coenzyme A carboxylase (ACC) complex. Biotin carboxylase (BC) catalyzes the carboxylation of biotin on its carrier protein (BCCP) and then the CO(2) group is transferred by the transcarboxylase to acetyl-CoA to form malonyl-CoA. This is Acetyl-coenzyme A carboxylase carboxyl transferase subunit beta from Stenotrophomonas maltophilia (strain K279a).